The sequence spans 67 residues: MHTLILFRTVHSVSNFYIFSSTILLTSAVILAIFFFFGDGFFREKYRREFSTNSKEKDGNKNLTTVE.

This is an uncharacterized protein from Caenorhabditis elegans.